Consider the following 20-residue polypeptide: Fibrinogen (20 aa).

One can recognise a Vitellogenin domain in the interval 1–20 (LHSNLEYQYRYSGRVASGIP).

As to expression, secreted into the hemolymph.

The protein localises to the secreted. Its subcellular location is the extracellular space. Its function is as follows. Involved in lipid transport. Plays a role in hemolymph clotting. May be involved in wound healing in the cuticle. This Pacifastacus leniusculus (Signal crayfish) protein is Fibrinogen.